The chain runs to 676 residues: GRB2-associated-binding protein 2 (676 aa).

A Phosphoserine modification is found at Ser2. One can recognise a PH domain in the interval 6–117 (DVVCTGWLRK…WVQSICQICG (112 aa)). The tract at residues 127–178 (SLRNVSSAGHGPRSSPAELSSSSQHLLRERKSSAPSHSSQPTLFTFEPPVSN) is disordered. A phosphoserine mark is found at Ser133, Ser140, Ser141, Ser148, Ser149, Ser159, Ser164, Ser210, Ser218, Ser223, and Ser264. A compositionally biased stretch (low complexity) spans 140 to 149 (SSPAELSSSS). The span at 159-169 (SAPSHSSQPTL) shows a compositional bias: polar residues. Position 265 is a phosphothreonine (Thr265). Tyr266 bears the Phosphotyrosine mark. Thr278 carries the phosphothreonine modification. Residues Ser281 and Ser285 each carry the phosphoserine modification. Thr287 is modified (phosphothreonine). Tyr293 is subject to Phosphotyrosine. Thr331 is modified (phosphothreonine). The disordered stretch occupies residues 341 to 430 (VATPGDSAIA…RSAESMSDGV (90 aa)). The SH3-binding signature appears at 351-358 (PPPRPPKP). Ser368 is subject to Phosphoserine. Residues Thr385 and Thr391 each carry the phosphothreonine modification. Ser405 bears the Phosphoserine mark. Thr408 is subject to Phosphothreonine. 2 positions are modified to phosphoserine: Ser422 and Ser425. At Tyr452 the chain carries Phosphotyrosine. Ser480 carries the phosphoserine modification. The interval 492–531 (PSTTLPVHRGPSRGSEIQPPPVNRNLKPDRKAKPTPLDLR) is disordered. Residues 510–519 (PPPVNRNLKP) carry the SH3-binding motif. Residue Ser543 is modified to Phosphoserine. Composition is skewed to polar residues over residues 556–577 (FNSS…STDS) and 589–611 (NPVS…STGS). 2 disordered regions span residues 556-643 (FNSS…KVDY) and 656-676 (NTMQ…GAKL). 2 positions are modified to phosphoserine: Ser622 and Ser623. At Tyr643 the chain carries Phosphotyrosine. The segment covering 656-670 (NTMQEWTDVRQSSEP) has biased composition (polar residues).

Belongs to the GAB family. Part of a complex composed of EEIG1, TNFRSF11A/RANK, PLCG2, GAB2, TEC and BTK; complex formation increases in the presence of TNFSF11/RANKL. Interacts with SHC1; may mediate interaction with receptors. Interacts with SYK. Interacts with PI-3 kinase. Interacts with GRB2 (via SH3 2 domain). Interacts (phosphorylated) with PTPN11. Interacts with TNFRSF11A (via cytoplasmic domain). Interacts (phosphorylated) with 14-3-3 family proteins SFN, YWHAB, YWHAE, YWHAG, YWHAH, YWHAQ and YWHAZ; prevents interaction with GRB2 and attenuates GAB2 signaling. Interacts with HCK. Phosphorylated on tyrosine residue(s) by the thrombopoietin receptor (TPOR), stem cell factor receptor (SCFR), and T-cell and B-cell antigen receptors, gp130, IL-2R and IL-3R. Phosphorylated upon stimulation of TNFRSF11A/RANK by TNFSF11/RANKL. Phosphorylated upon EGF stimulation. Phosphorylated on tyrosine residues by HCK upon IL6 signaling. Post-translationally, dephosphorylated by PTPN11.

Its subcellular location is the cytoplasm. The protein resides in the cell membrane. It is found in the membrane raft. Its function is as follows. Adapter protein which acts downstream of several membrane receptors including cytokine, antigen, hormone, cell matrix and growth factor receptors to regulate multiple signaling pathways. Regulates osteoclast differentiation mediating the TNFRSF11A/RANK signaling. In allergic response, it plays a role in mast cells activation and degranulation through PI-3-kinase regulation. Also involved in the regulation of cell proliferation and hematopoiesis. The sequence is that of GRB2-associated-binding protein 2 (GAB2) from Homo sapiens (Human).